Here is a 566-residue protein sequence, read N- to C-terminus: Proline--tRNA ligase (566 aa).

It belongs to the class-II aminoacyl-tRNA synthetase family. ProS type 1 subfamily. Homodimer.

It is found in the cytoplasm. It carries out the reaction tRNA(Pro) + L-proline + ATP = L-prolyl-tRNA(Pro) + AMP + diphosphate. In terms of biological role, catalyzes the attachment of proline to tRNA(Pro) in a two-step reaction: proline is first activated by ATP to form Pro-AMP and then transferred to the acceptor end of tRNA(Pro). As ProRS can inadvertently accommodate and process non-cognate amino acids such as alanine and cysteine, to avoid such errors it has two additional distinct editing activities against alanine. One activity is designated as 'pretransfer' editing and involves the tRNA(Pro)-independent hydrolysis of activated Ala-AMP. The other activity is designated 'posttransfer' editing and involves deacylation of mischarged Ala-tRNA(Pro). The misacylated Cys-tRNA(Pro) is not edited by ProRS. The sequence is that of Proline--tRNA ligase from Bacillus cereus (strain B4264).